The primary structure comprises 1727 residues: MSSGGLEDDIQLVHEFLDVSFEDIKPLVSVNGFAVFISAIKTKVKDINALKDQLVLQEVNHEHKENVLTKKINFLEQQLQSSNNQAEESRNLISVLRNENESLKTNLENQNKRFDALTTENQSLRRANSELQEQSKIASEQLSIAKDQIEALQNENSHLGEQVQSAHQALSDIEERKKQHMFASSSSRVKEEILVQEKSALVSDLASLQSDHSKVCEKLEVSSRQVQDLEKKLAGLAQQNTELNEKIQLFEQKRSNYSSDGNISKILETDPTSIKELEEEVETQKRLTALWESKSSELQSEVAALQEKLTSQQSLYNNVTEELNNNKQQLLISENSLRELQEKYDSVVSELQVVKENKNTSVSAGVGLFSPLAQKLSAVQNPEFSFTKVYSDNMKLQQKVSSLKLQLDRLTNKFSSFCEQVKQRIPVVKQQRSEIVRNNIYMNFLSESLETSNNNLTKVQAELLSTKMRQEACYLQLTASRTQCSDLSREVICLMAELDHLNETKSRNVPATVQVALDEYAQNPSTASETLVNKELANFSSIKEAVSKTLELREKVRALECDVEIQKQTVQYQISNAVKENSNTLSEQIKNLESELNSSKIKNESLLNERNLLKEMLATSRSSILSHNSSAGNIDDKMKSIDESTRELEKNYEVYRNEMTAIQESLSKRNQDLLSEMEAIRKELENSKYQQQLSTDRLTNANNDVEAFKKEAKELRSINQNLQDIISRQDQRASKFAEELLHVNSLAERLKGELNASKGEKDLRKRTQERLISENDKLLAERERLMSLVSDLQTFLNQQQLSDAARKVKFESEKESLSLSLQKLKESNEKMSNDLHSLQKSLEKSGIEYSSRIKTLMLEKQSLSEDNRKLLDNQQMMEIKLQELNGVIELEKQRFSTLEAKFTQQKNTSYSEREALLESSLSDLQSKHTSLESQYNYSLRNIEQLQAASKLAEEMVERVKTEYDEYRLQTSESLEKNHLKITSLEQRIVILQDEIASSSLRCENITKDSETRVALLLEENKHLNNELSSHRNAEKQHLEKENDYKQQLLLVTEDLRKTREDYEKELLRHADARSTLQKLREDYTKALEQVEDLNKEIALKAGINESQPFPISEKEDPLRQEVYVLKKQNAMLLTQLQSSNLNFAEITSPSPDLDSVMKLGLSDLQNHVKRISKEMEIISCQRQLLFLENKKLKRTVESSNRVIADLQRGITEKDVSSTSESVGERSNYLNMVALLNESNKSLRENLERNEEVITELREKIETLKTDLANFRLNKEQLESQLQTEKAAVKKLENSNEEYKRHNQEILLSLNSSTSTSSDASRLKNELVSKENLIEELNQEIGHLKSELETVKSKSEDLENERAQNQSKIEQLELKNTKLAAAWRTKYEQVVNKSLEKHNQIRQQLSQKTSELEAKVAECHQLNEQLNKPSATPTATTQSEPSTVSLEEFNSTKEELSSTQRKLSEIMDILNTTKEELEKVRQNSNKSEGTSKDTEIPNEEEMERKKVMQQEVLRLRSRIAKELQKNELLRKQNQVLQDQVKALQETVVSSEEAESASVHADTKDLENLKKTEEMLSVTFQVIFNESISDFSTSTADFTTFVQKEWEKRREILQKDVEEQVAQSHQKQLDNIRKELEMRNKLKLSMLEKNLARVRAELEQSKKKDSPAILSLEASKNTDSNKSNSEVPAAQVKEKKLIAKTHSVDTNSPPKRSSSDAGMDVSNDVKKAK.

Coiled-coil stretches lie at residues 57–361, 443–463, 542–740, 804–1106, 1223–1427, 1497–1555, and 1601–1664; these read QEVN…KNTS, NFLS…QAEL, IKEA…AEEL, AARK…INES, GERS…QLNK, NEEE…AESA, and QKEW…KKDS. The segment covering 1423–1448 has biased composition (polar residues); that stretch reads EQLNKPSATPTATTQSEPSTVSLEEF. 3 disordered regions span residues 1423-1459, 1477-1500, and 1656-1727; these read EQLN…SSTQ, EKVR…NEEE, and LEQS…KKAK. Polar residues-rich tracts occupy residues 1672–1684 and 1702–1714; these read ASKN…SNSE and VDTN…SSSD. Phosphoserine is present on S1706.

It is found in the nucleus. The protein localises to the nuclear pore complex. Its subcellular location is the nucleus envelope. Its function is as follows. Maintains the proteasome and its anchor cut8 at the nucleus envelope and is required for kinetochore component proteostasis. Proper kinetochore stoichiometry ensures the correct attachment of kinetochores to spindle microtubules during cytokinesis. Required for the localization of spindle assembly checkpoint (SAC) protein mad2 and bub1 to the nucleus envelope during interphase, but not their localization during mitosis. The polypeptide is Nucleoporin alm1 (Schizosaccharomyces pombe (strain 972 / ATCC 24843) (Fission yeast)).